A 140-amino-acid polypeptide reads, in one-letter code: Large ribosomal subunit protein uL16 (140 aa).

The interval 1–24 (MALAPARTKYRKSQKGSRAGNAKR) is disordered.

It belongs to the universal ribosomal protein uL16 family. In terms of assembly, part of the 50S ribosomal subunit.

In terms of biological role, binds 23S rRNA and is also seen to make contacts with the A and possibly P site tRNAs. The chain is Large ribosomal subunit protein uL16 from Opitutus terrae (strain DSM 11246 / JCM 15787 / PB90-1).